Reading from the N-terminus, the 590-residue chain is Asparagine synthetase [glutamine-hydrolyzing] (590 aa).

Cysteine 2 (for GATase activity) is an active-site residue. In terms of domain architecture, Glutamine amidotransferase type-2 spans cysteine 2 to glycine 185. Residues arginine 50–isoleucine 54, asparagine 75–glutamate 77, and aspartate 98 each bind L-glutamine. Residues proline 193–proline 516 enclose the Asparagine synthetase domain. ATP is bound by residues leucine 231, valine 267, and serine 341–glycine 342.

The enzyme catalyses L-aspartate + L-glutamine + ATP + H2O = L-asparagine + L-glutamate + AMP + diphosphate + H(+). It participates in amino-acid biosynthesis; L-asparagine biosynthesis; L-asparagine from L-aspartate (L-Gln route): step 1/1. The protein is Asparagine synthetase [glutamine-hydrolyzing] of Asparagus officinalis (Garden asparagus).